We begin with the raw amino-acid sequence, 432 residues long: Putative transferase At1g60990, chloroplastic (432 aa).

The transit peptide at 1–57 (MNLLQSCKDMAMMMRIDSVSHITNTALLPCLYNGTVLRRRSLSLRKCGFRERKFQLR) directs the protein to the chloroplast.

Belongs to the GcvT family. As to expression, expressed in young leaves (at protein level).

It localises to the plastid. It is found in the chloroplast. Folate-dependent protein involved in Fe/S cluster biogenesis. Functionally complements an E.coli mutant defective in ygfZ. This is Putative transferase At1g60990, chloroplastic from Arabidopsis thaliana (Mouse-ear cress).